A 236-amino-acid chain; its full sequence is Putative N-acetylmannosamine-6-phosphate 2-epimerase (236 aa).

The protein belongs to the NanE family.

It catalyses the reaction an N-acyl-D-glucosamine 6-phosphate = an N-acyl-D-mannosamine 6-phosphate. The protein operates within amino-sugar metabolism; N-acetylneuraminate degradation; D-fructose 6-phosphate from N-acetylneuraminate: step 3/5. Functionally, converts N-acetylmannosamine-6-phosphate (ManNAc-6-P) to N-acetylglucosamine-6-phosphate (GlcNAc-6-P). This chain is Putative N-acetylmannosamine-6-phosphate 2-epimerase, found in Listeria welshimeri serovar 6b (strain ATCC 35897 / DSM 20650 / CCUG 15529 / CIP 8149 / NCTC 11857 / SLCC 5334 / V8).